The sequence spans 363 residues: Protein RecA (363 aa).

77-84 (GPESSGKT) contributes to the ATP binding site.

This sequence belongs to the RecA family.

Its subcellular location is the cytoplasm. Functionally, can catalyze the hydrolysis of ATP in the presence of single-stranded DNA, the ATP-dependent uptake of single-stranded DNA by duplex DNA, and the ATP-dependent hybridization of homologous single-stranded DNAs. It interacts with LexA causing its activation and leading to its autocatalytic cleavage. The protein is Protein RecA of Agrobacterium fabrum (strain C58 / ATCC 33970) (Agrobacterium tumefaciens (strain C58)).